We begin with the raw amino-acid sequence, 170 residues long: Group 2 truncated hemoglobin 3-1 (170 aa).

H98 provides a ligand contact to heme b.

Belongs to the truncated hemoglobin family. Group II subfamily. In terms of assembly, homodimer when ferric.

Hemoglobin-like protein that exhibits an unusual concentration-independent binding of O(2) and CO. Required for general plant development and during nodulation. May promote shoot organogenesis from root explants. This Medicago truncatula (Barrel medic) protein is Group 2 truncated hemoglobin 3-1.